Here is a 159-residue protein sequence, read N- to C-terminus: Transcriptional repressor NrdR (159 aa).

The segment at 3–34 (CPFCRHDDTQVVDSRVSEDGAAIRRRRRCSAC) is a zinc-finger region. The region spanning 49 to 139 (PFVVKKDGSR…VYRRFEDVSE (91 aa)) is the ATP-cone domain.

This sequence belongs to the NrdR family. Requires Zn(2+) as cofactor.

Negatively regulates transcription of bacterial ribonucleotide reductase nrd genes and operons by binding to NrdR-boxes. The polypeptide is Transcriptional repressor NrdR (Burkholderia cenocepacia (strain ATCC BAA-245 / DSM 16553 / LMG 16656 / NCTC 13227 / J2315 / CF5610) (Burkholderia cepacia (strain J2315))).